We begin with the raw amino-acid sequence, 364 residues long: D-alanine--D-alanine ligase (364 aa).

Residues Arg134–Asn347 form the ATP-grasp domain. Ala167–Glu222 provides a ligand contact to ATP. Residues Asp300, Glu314, and Asn316 each coordinate Mg(2+).

It belongs to the D-alanine--D-alanine ligase family. Mg(2+) is required as a cofactor. Mn(2+) serves as cofactor.

It is found in the cytoplasm. The catalysed reaction is 2 D-alanine + ATP = D-alanyl-D-alanine + ADP + phosphate + H(+). The protein operates within cell wall biogenesis; peptidoglycan biosynthesis. In terms of biological role, cell wall formation. The protein is D-alanine--D-alanine ligase of Legionella pneumophila (strain Paris).